A 645-amino-acid polypeptide reads, in one-letter code: MKLSMVMVLLVLAGQLSGCGGNDDNNSERTHESGDSNGDVTTPDNDASSNDEDDAALEPTQLRSVEFAQSHVLPPGGLSWDLKESGELQLVEKRDTLVLATFDEAVQAAEVRVYDKNHQLLSSLNLSKPSDLPPTEGDDLPYSDDAWSAVIPSDDMSKGVNIRVVAQGKSASEIVTPALHPELDLTIQSLPFLIYGANESNIPFKIDDLKVMFADPDTAGQGFAGMPFSKTHIVNHPLGVFESDYLIAPPSGSAPAKKVESAADPDYSKPILDMVWHIEYATGDMALNKITFAPSMLIDHSKAGPIKTRGFGGMAYTGSGASMGYPSLGLLWHEGGHALGLPHSLSGSKDLRGPYYPYAEGSLSGSAWGYDQHKGYFRSPLTAPTSRYFVCNGERGGGVFQKTPEGRCYRFDPMHSADEQKDPDAAFPLFSDFNAGKMQRWVRNRARMNPSNDGFQVLDDNGDWADFVPETKHYAGWHIKEHYPVSFDKTTDFIMITYSLAGTDAASHFYNPIRYKGNAIEYVDAINQDGLNSINADISSGARAKYSDYCRRQGCDFTLKVTYEDGSTSYRVLKGSARKDWQPSVWKDDYLNENSKDSYLFWAVALVAPDGAPKVKKLELLDTPILWNLSPTAVMGAEALVVKQL.

Positions 1-13 are cleaved as a signal peptide; sequence MKLSMVMVLLVLA. The tract at residues 19-55 is disordered; sequence CGGNDDNNSERTHESGDSNGDVTTPDNDASSNDEDDA. Positions 177 to 448 constitute a Peptidase M66 domain; it reads PALHPELDLT…QRWVRNRARM (272 aa). Histidine 333 contributes to the Zn(2+) binding site. Glutamate 334 is a catalytic residue. Residues histidine 337 and histidine 343 each coordinate Zn(2+).

The protein belongs to the dictomallein family. The cofactor is Zn(2+).

It is found in the secreted. The polypeptide is Dictomallein-like protein (dtmL) (Hahella chejuensis (strain KCTC 2396)).